Consider the following 299-residue polypeptide: ATP phosphoribosyltransferase (299 aa).

Belongs to the ATP phosphoribosyltransferase family. Long subfamily. Equilibrium between an active dimeric form, an inactive hexameric form and higher aggregates. Interconversion between the various forms is largely reversible and is influenced by the natural substrates and inhibitors of the enzyme. Mg(2+) is required as a cofactor.

The protein localises to the cytoplasm. The catalysed reaction is 1-(5-phospho-beta-D-ribosyl)-ATP + diphosphate = 5-phospho-alpha-D-ribose 1-diphosphate + ATP. Its pathway is amino-acid biosynthesis; L-histidine biosynthesis; L-histidine from 5-phospho-alpha-D-ribose 1-diphosphate: step 1/9. Feedback inhibited by histidine. In terms of biological role, catalyzes the condensation of ATP and 5-phosphoribose 1-diphosphate to form N'-(5'-phosphoribosyl)-ATP (PR-ATP). Has a crucial role in the pathway because the rate of histidine biosynthesis seems to be controlled primarily by regulation of HisG enzymatic activity. The sequence is that of ATP phosphoribosyltransferase from Yersinia pseudotuberculosis serotype O:1b (strain IP 31758).